Here is a 366-residue protein sequence, read N- to C-terminus: RNA 3'-terminal phosphate cyclase (366 aa).

The ATP site is built by Gln104, Pro131, Tyr294, Asp297, Gln298, and His320. His320 functions as the Tele-AMP-histidine intermediate in the catalytic mechanism.

Belongs to the RNA 3'-terminal cyclase family. Type 1 subfamily.

The protein resides in the nucleus. It localises to the nucleoplasm. It catalyses the reaction a 3'-end 3'-phospho-ribonucleotide-RNA + ATP = a 3'-end 2',3'-cyclophospho-ribonucleotide-RNA + AMP + diphosphate. Functionally, catalyzes the conversion of 3'-phosphate to a 2',3'-cyclic phosphodiester at the end of RNA. The mechanism of action of the enzyme occurs in 3 steps: (A) adenylation of the enzyme by ATP; (B) transfer of adenylate to an RNA-N3'P to produce RNA-N3'PP5'A; (C) and attack of the adjacent 2'-hydroxyl on the 3'-phosphorus in the diester linkage to produce the cyclic end product. Likely functions in some aspects of cellular RNA processing. Function plays an important role in regulating axon regeneration by inhibiting central nervous system (CNS) axon regeneration following optic nerve injury. In Macaca fascicularis (Crab-eating macaque), this protein is RNA 3'-terminal phosphate cyclase (RTCA).